The following is a 142-amino-acid chain: ER-derived vesicles protein ERV15 (142 aa).

The Cytoplasmic segment spans residues 1–7; that stretch reads MSGTGLS. A helical transmembrane segment spans residues 8-28; it reads LFVTGLILNCLNSICQIYFTI. Over 29 to 55 the chain is Extracellular; that stretch reads LYGDLEADYINSIELCKRVNRLSVPEA. A helical transmembrane segment spans residues 56–76; the sequence is ILQAFISALFLFNGYWFVFLL. At 77 to 114 the chain is on the cytoplasmic side; sequence NVPVLAYNASKVYKKTHLLDATDIFRKLGRCKIECFLK. A helical membrane pass occupies residues 115 to 135; sequence LGFYLLIFFFYFYRMVTALLE. Residues 136–142 lie on the Extracellular side of the membrane; it reads NDANLIS.

The protein belongs to the cornichon family.

Its subcellular location is the membrane. This Saccharomyces cerevisiae (strain ATCC 204508 / S288c) (Baker's yeast) protein is ER-derived vesicles protein ERV15 (ERV15).